A 159-amino-acid polypeptide reads, in one-letter code: Ribosomal RNA large subunit methyltransferase H (159 aa).

S-adenosyl-L-methionine-binding positions include Leu-76, Gly-108, and 127–132; that span reads MSKMTF.

Belongs to the RNA methyltransferase RlmH family. In terms of assembly, homodimer.

It localises to the cytoplasm. It catalyses the reaction pseudouridine(1915) in 23S rRNA + S-adenosyl-L-methionine = N(3)-methylpseudouridine(1915) in 23S rRNA + S-adenosyl-L-homocysteine + H(+). Specifically methylates the pseudouridine at position 1915 (m3Psi1915) in 23S rRNA. The polypeptide is Ribosomal RNA large subunit methyltransferase H (Ureaplasma parvum serovar 3 (strain ATCC 27815 / 27 / NCTC 11736)).